The chain runs to 327 residues: L-lactate dehydrogenase (327 aa).

Residues Val18, Asp39, Lys44, Tyr69, and Gly83–Ala84 contribute to the NAD(+) site. Residues Gln86, Arg92, and Asn124–Asp127 each bind substrate. Residues Ala122–Asn124 and Ser147 each bind NAD(+). Residue Asp152 to Arg155 participates in substrate binding. Residues Arg157 and His172 each coordinate beta-D-fructose 1,6-bisphosphate. Residue His179 is the Proton acceptor of the active site. At Tyr224 the chain carries Phosphotyrosine. Residue Thr233 coordinates substrate.

It belongs to the LDH/MDH superfamily. LDH family. As to quaternary structure, homotetramer.

The protein localises to the cytoplasm. It carries out the reaction (S)-lactate + NAD(+) = pyruvate + NADH + H(+). The protein operates within fermentation; pyruvate fermentation to lactate; (S)-lactate from pyruvate: step 1/1. Its activity is regulated as follows. Allosterically activated by fructose 1,6-bisphosphate (FBP). In terms of biological role, catalyzes the conversion of lactate to pyruvate. This Streptococcus equi subsp. equi (strain 4047) protein is L-lactate dehydrogenase.